Reading from the N-terminus, the 173-residue chain is Adenine phosphoribosyltransferase (173 aa).

Belongs to the purine/pyrimidine phosphoribosyltransferase family. As to quaternary structure, homodimer.

The protein localises to the cytoplasm. It carries out the reaction AMP + diphosphate = 5-phospho-alpha-D-ribose 1-diphosphate + adenine. It participates in purine metabolism; AMP biosynthesis via salvage pathway; AMP from adenine: step 1/1. Its function is as follows. Catalyzes a salvage reaction resulting in the formation of AMP, that is energically less costly than de novo synthesis. The protein is Adenine phosphoribosyltransferase of Desulfosudis oleivorans (strain DSM 6200 / JCM 39069 / Hxd3) (Desulfococcus oleovorans).